The following is a 184-amino-acid chain: Adenine phosphoribosyltransferase (184 aa).

The protein belongs to the purine/pyrimidine phosphoribosyltransferase family. In terms of assembly, homodimer.

It localises to the cytoplasm. It carries out the reaction AMP + diphosphate = 5-phospho-alpha-D-ribose 1-diphosphate + adenine. The protein operates within purine metabolism; AMP biosynthesis via salvage pathway; AMP from adenine: step 1/1. In terms of biological role, catalyzes a salvage reaction resulting in the formation of AMP, that is energically less costly than de novo synthesis. This chain is Adenine phosphoribosyltransferase, found in Parafrankia sp. (strain EAN1pec).